We begin with the raw amino-acid sequence, 451 residues long: Phosphoglucosamine mutase (451 aa).

Serine 104 acts as the Phosphoserine intermediate in catalysis. Positions 104, 242, 244, and 246 each coordinate Mg(2+). Residue serine 104 is modified to Phosphoserine.

This sequence belongs to the phosphohexose mutase family. The cofactor is Mg(2+). Activated by phosphorylation.

The catalysed reaction is alpha-D-glucosamine 1-phosphate = D-glucosamine 6-phosphate. Catalyzes the conversion of glucosamine-6-phosphate to glucosamine-1-phosphate. The protein is Phosphoglucosamine mutase of Kocuria rhizophila (strain ATCC 9341 / DSM 348 / NBRC 103217 / DC2201).